Consider the following 453-residue polypeptide: Glutamyl-tRNA(Gln) amidotransferase subunit A (453 aa).

Catalysis depends on charge relay system residues K56 and S131. The active-site Acyl-ester intermediate is the S155.

This sequence belongs to the amidase family. GatA subfamily. Heterotrimer of A, B and C subunits.

It catalyses the reaction L-glutamyl-tRNA(Gln) + L-glutamine + ATP + H2O = L-glutaminyl-tRNA(Gln) + L-glutamate + ADP + phosphate + H(+). Its function is as follows. Allows the formation of correctly charged Gln-tRNA(Gln) through the transamidation of misacylated Glu-tRNA(Gln) in organisms which lack glutaminyl-tRNA synthetase. The reaction takes place in the presence of glutamine and ATP through an activated gamma-phospho-Glu-tRNA(Gln). The chain is Glutamyl-tRNA(Gln) amidotransferase subunit A from Campylobacter fetus subsp. fetus (strain 82-40).